The chain runs to 105 residues: Thioredoxin (105 aa).

Residues Val-2 to Leu-105 enclose the Thioredoxin domain. An N6-acetyllysine modification is found at Lys-3. An N6-succinyllysine modification is found at Lys-8. Residues Cys-32 and Cys-35 each act as nucleophile in the active site. Residues Cys-32 and Cys-35 are joined by a disulfide bond. Lys-39 carries the N6-acetyllysine modification. S-nitrosocysteine occurs at positions 62 and 69. Position 73 is an S-nitrosocysteine; alternate (Cys-73). N6-acetyllysine; alternate is present on Lys-94. Residue Lys-94 is modified to N6-succinyllysine; alternate.

This sequence belongs to the thioredoxin family. In terms of assembly, homodimer; disulfide-linked. Interacts with TXNIP through the redox-active site. Interacts with MAP3K5 and CASP3. Interacts with APEX1; the interaction stimulates the FOS/JUN AP-1 DNA-binding activity in a redox-dependent manner. In the fully reduced protein, both Cys-69 and Cys-73 are nitrosylated in response to nitric oxide (NO). When two disulfide bonds are present in the protein, only Cys-73 is nitrosylated. Cys-73 can serve as donor for nitrosylation of target proteins.

The protein localises to the nucleus. It is found in the cytoplasm. The protein resides in the secreted. Participates in various redox reactions through the reversible oxidation of its active center dithiol to a disulfide and catalyzes dithiol-disulfide exchange reactions. Plays a role in the reversible S-nitrosylation of cysteine residues in target proteins, and thereby contributes to the response to intracellular nitric oxide. Nitrosylates the active site Cys of CASP3 in response to nitric oxide (NO), and thereby inhibits caspase-3 activity. Induces the FOS/JUN AP-1 DNA binding activity in ionizing radiation (IR) cells through its oxidation/reduction status and stimulates AP-1 transcriptional activity. This Oryctolagus cuniculus (Rabbit) protein is Thioredoxin (TXN).